We begin with the raw amino-acid sequence, 245 residues long: Large ribosomal subunit protein uL4 (245 aa).

The span at 1 to 13 (MSRVATSDPSVTA) shows a compositional bias: polar residues. Disordered stretches follow at residues 1-28 (MSRV…EGGS), 56-114 (ARQG…QRTP), and 224-245 (TSTA…EENK). Residues 59–71 (GTHDTKTRGEVRG) show a composition bias toward basic and acidic residues. Residues 72-83 (GGRKPYRQKGTG) are compositionally biased toward basic residues.

It belongs to the universal ribosomal protein uL4 family. As to quaternary structure, part of the 50S ribosomal subunit.

In terms of biological role, one of the primary rRNA binding proteins, this protein initially binds near the 5'-end of the 23S rRNA. It is important during the early stages of 50S assembly. It makes multiple contacts with different domains of the 23S rRNA in the assembled 50S subunit and ribosome. Functionally, forms part of the polypeptide exit tunnel. This is Large ribosomal subunit protein uL4 from Frankia casuarinae (strain DSM 45818 / CECT 9043 / HFP020203 / CcI3).